We begin with the raw amino-acid sequence, 1247 residues long: MLLNDQKFLPINIHYLNQGRFDLNKLKNFNLLINQRENWRFFLINGLKLAFKEFEHFKIKNNNFIIDIVFQEKFLFFKQIRQAYLKKVETFGYNIFIPIIITQKILNKKNNLNLTFFKWLDLGILPSLSPKTSFYIDGISRAVSTQKKKSPGLMFDFDLTKKSSLEKREGEAFLKIIAPRGSWFKISYSEDHIIFIEIRNIAYKIPIFTFLCALGFSLESIFQFFNYNINNFKLIPNKYDNTNALIKARNDIFILYSDLLPLLNKTKKNFEIKYIINHYFFSYIWNSNTRYCGEATRLHLYNKVGSPLSLNSLFLEEIDFIYITKIFIYRLINNNFKDENNDNLKNMRFRNGGDYIYLQTRQGLFDFESFLNINLHNIENNSFFCNITTNKKKEDIYSIKKKKNIKNFNLSKISFLKHILLKSWKSFFLSGTLSQFAENLNPLSYITHARRFTSLGPGSLKKAEASIEVRSINPSYNGRVCPIETPEGFNAGLVHSFSLYSFKGVNGELLLPFYFIYKNIKQSYYLPPIFFNIEEESNQSIITGDLIHEKWNDFLNKKLSLRNNFHLDKNDISKISFQSLSPYHMISLATSLIPFLEHNDANRALMGSNMQRQTVPVLGAHNFIVRTGLDTKFFSDISSIPISQINGFNFESNNNYCYFYKIDNLITLNNISYNYIKKTNHNSLYINESIKKKNPWHQQGDFLINNSVIENGKLALGPNLLLAYLPWHGYNYEDAVIINERCVSQKILTSLHIITLTNSLELAYREINKKKEFFYEVPVKLEILFSFFAPFYYNLKYYKNQEFSQFEKKNPSYYTNNINIGTFLKKGDCIFSKCRIRFSFSRELRLQYKELFILLREAFPTFEDFKNFANIFAYDKYKQKLDRKKQKKNTRLKTDNFIFNKNSTLFKKHKLKALINYYNIEDSTIYAQKNQEGLIISKHLKKVPMTYTSITPFDLEEFLSTKESKKKEYYNLFFTKSINIEILQLRDIQLGDKCAGRHGNKGIISKICPINEMPLLPDGTPIDIILNPLGIPSRMNVGQIFESLLGLAGFYLNETYTINIFDEQFGLEASRSFVLSKLYKASILSNKPWLFLKKNAGKTNIIDGLTGKYFQQPITIGYSSILKLIHMVTDKLHGRSIGGYSTLTLQPTKGKSLLGGQRVGEMELWALQGYGASWALQELYTLKSDLVEARQHFQNYINSFNIESNIYDRNDISLTELESLIISDTFKPYTLECFLEDLKALCIYIDY.

This sequence belongs to the RNA polymerase beta chain family. In terms of assembly, in plastids the minimal PEP RNA polymerase catalytic core is composed of four subunits: alpha, beta, beta', and beta''. When a (nuclear-encoded) sigma factor is associated with the core the holoenzyme is formed, which can initiate transcription.

It localises to the plastid. The enzyme catalyses RNA(n) + a ribonucleoside 5'-triphosphate = RNA(n+1) + diphosphate. DNA-dependent RNA polymerase catalyzes the transcription of DNA into RNA using the four ribonucleoside triphosphates as substrates. In Helicosporidium sp. subsp. Simulium jonesii (Green alga), this protein is DNA-directed RNA polymerase subunit beta (rpoB).